The chain runs to 207 residues: SPRY domain-containing protein 4 (207 aa).

The region spanning 12 to 206 (CRWGAKRLGV…THSGLEVPEG (195 aa)) is the B30.2/SPRY domain. An N6-acetyllysine mark is found at lysine 53 and lysine 130. Position 139 is an N6-succinyllysine (lysine 139).

The polypeptide is SPRY domain-containing protein 4 (SPRYD4) (Homo sapiens (Human)).